The following is a 399-amino-acid chain: Replication-associated protein ORF4 (399 aa).

Residues Y251 and Y255 each act as O-(5'-phospho-DNA)-tyrosine intermediate in the active site.

This sequence belongs to the microviridae Rep protein family.

The catalysed reaction is ATP + (deoxyribonucleotide)n-3'-hydroxyl + 5'-phospho-(deoxyribonucleotide)m = (deoxyribonucleotide)n+m + AMP + diphosphate.. Functionally, plays an essential role in viral DNA replication. Binds the origin of replication and cleaves the dsDNA replicative form I (RFI) and becomes covalently bound to it via phosphotyrosine bond, generating the dsDNA replicative form II (RFII). In turn, viral DNA replication initiates at the 3'-OH of the cleavage site. After one round of rolling circle synthesis, protein ORF4 is linked to the newly synthesized ssDNA and joins the ends of the displaced strand to generate a circular single-stranded molecule ready to be packed into a virion. This chain is Replication-associated protein ORF4, found in Chlamydia psittaci (Chlamydophila psittaci).